The following is a 316-amino-acid chain: Glutathione synthetase (316 aa).

The ATP-grasp domain occupies 125–311 (KLFTAWFPEL…ITGMLMNAIE (187 aa)). 151 to 207 (HQKHGDVIFKPLDGMGGASIFRLKKDDPNVGVIIETLTEHGNRFCMAQNFLPAIKEG) is an ATP binding site. Mg(2+)-binding residues include glutamate 281 and asparagine 283.

The protein belongs to the prokaryotic GSH synthase family. Mg(2+) is required as a cofactor. It depends on Mn(2+) as a cofactor.

It catalyses the reaction gamma-L-glutamyl-L-cysteine + glycine + ATP = glutathione + ADP + phosphate + H(+). It participates in sulfur metabolism; glutathione biosynthesis; glutathione from L-cysteine and L-glutamate: step 2/2. This chain is Glutathione synthetase, found in Photorhabdus laumondii subsp. laumondii (strain DSM 15139 / CIP 105565 / TT01) (Photorhabdus luminescens subsp. laumondii).